The primary structure comprises 1111 residues: Kinesin-like protein KIP1 (1111 aa).

Residues 1 to 11 (MARSSLPNRRT) show a composition bias toward polar residues. The segment at 1 to 34 (MARSSLPNRRTAQFEANKRRTIAHAPSPSLSNGM) is disordered. A Kinesin motor domain is found at 52–410 (NIHVYVRCRS…LEYATRAKSI (359 aa)). Residue 141–148 (GQTGTGKT) participates in ATP binding. Coiled coils occupy residues 424 to 510 (TCLK…IIQN), 648 to 670 (KDLN…DIKS), 710 to 780 (KLIK…DQDI), and 808 to 828 (HNAE…TNDL). Over residues 1007–1016 (AENKSKDDTS) the composition is skewed to basic and acidic residues. A disordered region spans residues 1007 to 1111 (AENKSKDDTS…DILQNKKLHQ (105 aa)). 2 stretches are compositionally biased toward polar residues: residues 1017–1038 (NSRT…QFSP) and 1057–1082 (SINS…SQNN).

Belongs to the TRAFAC class myosin-kinesin ATPase superfamily. Kinesin family. BimC subfamily. As to quaternary structure, might be dimeric.

The protein resides in the cytoplasm. Its subcellular location is the cytoskeleton. It is found in the spindle. In terms of biological role, required for assembly of the mitotic spindle. Interacts with spindle microtubules to produce an outwardly directed force acting upon the poles. Following spindle assembly, CIN8 and KIP1 apparently act to oppose a force that draws separated poles back together. This force seems to be mediate by KAR3. The chain is Kinesin-like protein KIP1 (KIP1) from Saccharomyces cerevisiae (strain ATCC 204508 / S288c) (Baker's yeast).